The chain runs to 453 residues: Cytochrome P450 monooxygenase PC-20 (453 aa).

Helical transmembrane passes span Leu-5–Ile-25 and Leu-49–Val-69. Cys-387 contacts heme.

Belongs to the cytochrome P450 family. Requires heme as cofactor.

The protein localises to the membrane. The protein operates within secondary metabolite biosynthesis. Functionally, cytochrome P450 monooxygenase; part of the gene cluster that mediates the biosynthesis of the indole diterpenes penitrems. The geranylgeranyl diphosphate (GGPP) synthase penG catalyzes the first step in penitrem biosynthesis via conversion of farnesyl pyrophosphate and isopentyl pyrophosphate into geranylgeranyl pyrophosphate (GGPP). Condensation of indole-3-glycerol phosphate with GGPP by the prenyl transferase penC then forms 3-geranylgeranylindole (3-GGI). Epoxidation by the FAD-dependent monooxygenase penM leads to a epoxidized-GGI that is substrate of the terpene cyclase penB for cyclization to yield paspaline. Paspaline is subsequently converted to 13-desoxypaxilline by the cytochrome P450 monooxygenase penP, the latter being then converted to paxilline by the cytochrome P450 monooxygenase penQ. Paxilline is converted to beta-paxitriol via C-10 ketoreduction by the short-chain dehydrogenase PC-15 which can be monoprenylated at the C-20 by the indole diterpene prenyltransferase penD. A two-step elimination (acetylation and elimination) process performed by the O-acetyltransferase PC-16 and the P.simplicissimum ptmI-ortholog not yet identified in P.crustosum, leads to the production of the prenylated form of penijanthine. The FAD-linked oxidoreductase ptmO then converts the prenylated form of penijanthine into PC-M5 which is in turn transformed into PC-M4 by the aromatic dimethylallyltransferase PC-22. A series of oxidation steps involving 4 cytochrome P450 monooxygenases (PC-21, PC-05, PC-23, PC-20) and a FAD-dependent monooxygenase (PC-14) are required for the transformation of PC-M4 to penitrems A and E. Synthesis of these final products is proposed to proceed via penitrems D and C (PC-21, PC-05, PC-14) and penitrems B and F (PC-21, PC-05, PC-14, PC-23). The sequence is that of Cytochrome P450 monooxygenase PC-20 from Penicillium crustosum (Blue mold fungus).